We begin with the raw amino-acid sequence, 660 residues long: MKVTLSALDTSESSFTPLVVIELAQDVKEETKEWLKNRIIAKKKDGGAQLLFRPLLNKYEQETLENQNLYLVGASKIRMLLGAEAVGLVKECNDNTMRAFTYRTRQNFKGFDDNNDDFLTMAECQFIIKHELENLRAKDEKMIPGYPQAKLYPGKSLLRRLLTSGIVIQVFPLHDSEALKKLEDTWYTRFALKYQPIDSIRGYFGETIALYFGFLEYFTFALIPMAVIGLPYYLFVWEDYDKYVIFASFNLIWSTVILELWKRGCANMTYRWGTLLMKRKFEEPRPGFHGVLGINSITGKEEPLYPSYKRQLRIYLVSLPFVCLCLYFSLYVMMIYFDMEVWALGLHENSGSEWTSVLLYVPSIIYAIVIEIMNRLYRYAAEFLTSWENHRLESAYQNHLILKVLVFNFLNCFASLFYIAFVLKDMKLLRQSLATLLITSQILNQIMESFLPYWLQRKHGVRVKRKVQALKADIDATLYEQVILEKEMGTYLGTFDDYLELFLQFGYVSLFSCVYPLAAAFAVLNNFTEVNSDALKMCRVFKRPFSEPSANIGVWQLAFETMSVISVVTNCALIGMSPQVNAVFPESKADLILIVVAVEHALLALKFILAFAIPDKPRHIQMKLARLEFESLEALKQQQMKLVTENLKEEPMESGKEKAT.

Topologically, residues 1-207 are cytoplasmic; it reads MKVTLSALDT…DSIRGYFGET (207 aa). A helical transmembrane segment spans residues 208–228; that stretch reads IALYFGFLEYFTFALIPMAVI. Residues 229-240 lie on the Extracellular side of the membrane; the sequence is GLPYYLFVWEDY. The chain crosses the membrane as a helical span at residues 241–261; it reads DKYVIFASFNLIWSTVILELW. At 262–316 the chain is on the cytoplasmic side; that stretch reads KRGCANMTYRWGTLLMKRKFEEPRPGFHGVLGINSITGKEEPLYPSYKRQLRIYL. Residues 317–337 traverse the membrane as a helical segment; it reads VSLPFVCLCLYFSLYVMMIYF. Over 338 to 352 the chain is Extracellular; that stretch reads DMEVWALGLHENSGS. A helical transmembrane segment spans residues 353–373; that stretch reads EWTSVLLYVPSIIYAIVIEIM. Over 374–400 the chain is Cytoplasmic; that stretch reads NRLYRYAAEFLTSWENHRLESAYQNHL. The helical transmembrane segment at 401–421 threads the bilayer; that stretch reads ILKVLVFNFLNCFASLFYIAF. Over 422–500 the chain is Extracellular; that stretch reads VLKDMKLLRQ…YLGTFDDYLE (79 aa). The helical transmembrane segment at 501 to 521 threads the bilayer; sequence LFLQFGYVSLFSCVYPLAAAF. The Cytoplasmic segment spans residues 522–553; the sequence is AVLNNFTEVNSDALKMCRVFKRPFSEPSANIG. The chain crosses the membrane as a helical span at residues 554–574; sequence VWQLAFETMSVISVVTNCALI. Residues 575–590 are Extracellular-facing; that stretch reads GMSPQVNAVFPESKAD. A helical membrane pass occupies residues 591–611; the sequence is LILIVVAVEHALLALKFILAF. Topologically, residues 612–660 are cytoplasmic; sequence AIPDKPRHIQMKLARLEFESLEALKQQQMKLVTENLKEEPMESGKEKAT.

It belongs to the anoctamin family. Highly expressed in the brain. Intermediate levels in the retina and heart and low levels in the placenta, liver, lung, duodenum, kidney, testis and spleen. In brain areas, highest expression in the frontal and occipital cortices and in the cerebellum. Lower expression in the fetal brain than in the adult brain.

The protein resides in the cell membrane. Its function is as follows. Does not exhibit calcium-activated chloride channel (CaCC) activity. Can inhibit the activity of ANO1. In Homo sapiens (Human), this protein is Anoctamin-10 (ANO10).